The following is a 455-amino-acid chain: Major facilitator superfamily domain-containing protein 10 (455 aa).

Transmembrane regions (helical) follow at residues 27–47 (VVFL…PLLP), 86–106 (VLFG…CAPL), 113–135 (CLGR…AVWA), 148–168 (LIGG…ADLG), 176–196 (GMAV…MLGA), 202–222 (MAPW…FCFL), 275–295 (LGLV…TLSF), 310–327 (KMFF…GAYA), 336–356 (VAAV…IGWG), 359–379 (LPVL…VVPC), and 421–441 (LAGA…PFFL).

The protein belongs to the major facilitator superfamily. As to expression, expressed in luminal membrane of renal tubules (at protein level). Detected in all tissues tested with higher expression in heart, splee, kidney, leukocytes and prostate.

The protein resides in the nucleus inner membrane. It localises to the cell membrane. In terms of biological role, probable organic anion transporter which may serve as a transporter for some non-steroidal anti-inflammatory drugs (NSAIDs) as well as other organic anions across the luminal membranes of renal proximal tubules at the final excretion step into the urine. In Homo sapiens (Human), this protein is Major facilitator superfamily domain-containing protein 10 (MFSD10).